Reading from the N-terminus, the 207-residue chain is Zinc finger protein JAGGED-like (207 aa).

Residues 1–16 (MRADENNTLDLNNLPD) show a composition bias toward low complexity. The tract at residues 1–20 (MRADENNTLDLNNLPDDPSR) is disordered. Residues 50-72 (YECRFCSLKFFKSQALGGHMNRH) form a C2H2-type zinc finger.

In terms of tissue distribution, expressed in the emerging leaf, stamen and carpel primordia. Not expressed in the apical shoot meristem (SAM).

The protein resides in the nucleus. Functionally, acts with JAG to promote growth and patterning in stamens and carpels. Promotes the growth of the abaxial and adaxial sides of floral organs. Promotes the growth of the pollen-bearing microsporangia in anthers, the carpel walls of the gynoecium and the establishment of the correct number of cell layers in carpel walls. Promotes leaf blade growth and trichome development. The sequence is that of Zinc finger protein JAGGED-like (JGL) from Arabidopsis thaliana (Mouse-ear cress).